The primary structure comprises 184 residues: MSRLAKKPINIPQGVTVEVNDGTVKVRGPKGELTQDFLPYVKIEIEDGKVWIRPNEAQVRRKSDWRKVKMFQGTYWSLIRNMVIGVTEGYKKELEIVGIGYRAQLQGNTLVMNLGYAHPVVYEIPSDVKVEVPAPNRIVVSGIDKQRVGQVAAEIRAFRPPNVYTGKGIRYVGEVVRQKEGKKA.

It belongs to the universal ribosomal protein uL6 family. In terms of assembly, part of the 50S ribosomal subunit.

Functionally, this protein binds to the 23S rRNA, and is important in its secondary structure. It is located near the subunit interface in the base of the L7/L12 stalk, and near the tRNA binding site of the peptidyltransferase center. The chain is Large ribosomal subunit protein uL6 from Thermotoga neapolitana (strain ATCC 49049 / DSM 4359 / NBRC 107923 / NS-E).